We begin with the raw amino-acid sequence, 622 residues long: Cell pattern formation-associated protein stuA (622 aa).

Disordered stretches follow at residues 1–24 and 62–81; these read MASM…QTYA and YPNS…SISS. An HTH APSES-type domain is found at 129 to 235; that stretch reads RVTATLWEDE…QHISNLLYHP (107 aa). The segment at residues 163-184 is a DNA-binding region (H-T-H motif); sequence GTKLLNVAGMTRGRRDGILKSE. Disordered stretches follow at residues 239 to 517 and 549 to 622; these read NQRN…TPPR and SNSG…SARR. Composition is skewed to polar residues over residues 274–283, 302–345, and 355–370; these read LQTPVPSHMS, ASAS…ARSM, and GNNL…QSGY. The span at 384–395 shows a compositional bias: low complexity; it reads PQYAPQQPLPQQ. 4 stretches are compositionally biased toward polar residues: residues 404–421, 455–470, 480–506, and 549–563; these read MPTS…QRGS, SGYN…TNPS, QLTP…NTAP, and SNSG…SMGS. Residues 565–590 are nuclear localization domain; that stretch reads KRMRDDDDDRIVPPDSRGEFDTKRRK. Residues 566-586 show a composition bias toward basic and acidic residues; that stretch reads RMRDDDDDRIVPPDSRGEFDT.

This sequence belongs to the EFG1/PHD1/stuA family.

It localises to the nucleus. Its function is as follows. Transcription factor that regulates asexual reproduction. Binds the StuA-response elements (StRE) with the consensus sequence 5'-(A/T)CGCG(T/A)N(A/C)-3' at the promoters of target genes. Required from the very earliest events of asexual reproduction until completion of conidiophore development, but is not specifically required for differentiation of conidia. Represses transcription of the abaA developmental regulatory gene and of the developmentally regulated awh11 gene. Controls the expression of the catalase-peroxidase gene cpeA. Plays an important role in cell wall biogenesis during the development by controlling the transcription level of fksA. This is Cell pattern formation-associated protein stuA from Emericella nidulans (strain FGSC A4 / ATCC 38163 / CBS 112.46 / NRRL 194 / M139) (Aspergillus nidulans).